Here is a 421-residue protein sequence, read N- to C-terminus: MAATLILEPAGRCCWDEPLRIAVRGLAPEQPVTLRTSLRDEEGALFRAHARYRADARDELDLERAPALGGSFAGLQPMGLLWALEPEKALVRLVKRDVRTPFAVELEVLDGHDTEPGRLLCLAQNKRDFLRPGVRREPVRAGPVRAALFLPPDEGPFPGIIDLFGSSRGLCEYRASLLAGHGFAVLALAYFRFEDLPEDLNDVHLEYFEEAVDFMLQHPKVKGPSIALLGFSKGGDLCLSMASFLKGITATVLINACVANTVAPLHYKDMIIPKLVDDLGKVKITKSGFLTFMDTWSNPLEEHNHQSLVPLEKAQVPFLFIVGMDDQSWKSEFYAQIASERLQAHGKERPQIICYPETGHCIDPPYFPPSRASVHAVLGEAIFYGGEPKAHSKAQVDAWQQIQTFFHKHLNGKKSVKHSKI.

Catalysis depends on charge relay system residues Ser232, Asp326, and His360. The Peroxisome targeting signal motif lies at 419–421 (SKI).

It belongs to the C/M/P thioester hydrolase family.

Its subcellular location is the peroxisome. The protein resides in the cytoplasm. It carries out the reaction pristanoyl-CoA + H2O = 2,6,10,14-tetramethylpentadecanoate + CoA + H(+). The enzyme catalyses phytanoyl-CoA + H2O = 3,7,11,15-tetramethylhexadecanoate + CoA + H(+). Its pathway is lipid metabolism; fatty acid metabolism. Catalyzes the hydrolysis of acyl-CoAs into free fatty acids and coenzyme A (CoASH), regulating their respective intracellular levels. Catalyzes the hydrolysis of phytanoyl-CoA and pristanoyl-CoA, two methyl-branched fatty acids derived from phytol, that enter the body via the diet. The chain is Acyl-coenzyme A thioesterase 6 from Homo sapiens (Human).